The primary structure comprises 325 residues: Ribonuclease Z (325 aa).

Zn(2+) is bound by residues histidine 63, histidine 65, aspartate 67, histidine 68, histidine 147, aspartate 218, and histidine 276. Catalysis depends on aspartate 67, which acts as the Proton acceptor.

Belongs to the RNase Z family. As to quaternary structure, homodimer. Requires Zn(2+) as cofactor.

It carries out the reaction Endonucleolytic cleavage of RNA, removing extra 3' nucleotides from tRNA precursor, generating 3' termini of tRNAs. A 3'-hydroxy group is left at the tRNA terminus and a 5'-phosphoryl group is left at the trailer molecule.. Functionally, zinc phosphodiesterase, which displays some tRNA 3'-processing endonuclease activity. Probably involved in tRNA maturation, by removing a 3'-trailer from precursor tRNA. This chain is Ribonuclease Z, found in Oenococcus oeni (strain ATCC BAA-331 / PSU-1).